Reading from the N-terminus, the 366-residue chain is cAMP-dependent protein kinase regulatory subunit (366 aa).

Residues 1–121 form a dimerization and phosphorylation region; it reads MSGGNEEDQL…SLESAMRKNL (121 aa). Residues 55-87 are disordered; that stretch reads QRAQEGGNPDAADDDDIIVEPPKRSGGRRTGIS. The Pseudophosphorylation motif motif lies at 82-86; sequence RRTGI. At Ser87 the chain carries Phosphoserine. 3',5'-cyclic AMP contacts are provided by residues 122–239, Glu187, Arg196, 240–366, Glu311, and Arg320; these read LFAH…SKVQ and ILAD…KLMT.

It belongs to the cAMP-dependent kinase regulatory chain family. Tetramer, composed of 2 regulatory (R) and 2 catalytic (C) subunits. In the presence of cAMP it dissociates into 2 active monomeric C subunits and an R dimer that binds four cAMP molecules. In terms of processing, the pseudophosphorylation site binds to the substrate-binding region of the catalytic chain but is not phosphorylated. The physiological significance of phosphorylations by other kinases is unclear.

Its subcellular location is the cytoplasm. The protein localises to the cytosol. Functionally, controls the rhythmic contraction of enteric muscles probably by regulating G-protein coupled receptor aex-2-mediated calcium influx in GABAergic DVB neurons. The chain is cAMP-dependent protein kinase regulatory subunit (kin-2) from Caenorhabditis elegans.